Consider the following 579-residue polypeptide: Sulfite reductase [NADPH] hemoprotein beta-component (579 aa).

Cysteine 434, cysteine 440, cysteine 479, and cysteine 483 together coordinate [4Fe-4S] cluster. Cysteine 483 provides a ligand contact to siroheme.

Belongs to the nitrite and sulfite reductase 4Fe-4S domain family. Alpha(8)-beta(8). The alpha component is a flavoprotein, the beta component is a hemoprotein. Siroheme is required as a cofactor. [4Fe-4S] cluster serves as cofactor.

It catalyses the reaction hydrogen sulfide + 3 NADP(+) + 3 H2O = sulfite + 3 NADPH + 4 H(+). Its pathway is sulfur metabolism; hydrogen sulfide biosynthesis; hydrogen sulfide from sulfite (NADPH route): step 1/1. Its function is as follows. Component of the sulfite reductase complex that catalyzes the 6-electron reduction of sulfite to sulfide. This is one of several activities required for the biosynthesis of L-cysteine from sulfate. This chain is Sulfite reductase [NADPH] hemoprotein beta-component, found in Salmonella choleraesuis (strain SC-B67).